Reading from the N-terminus, the 292-residue chain is Phosphatidylserine decarboxylase proenzyme (292 aa).

Residues D89, H146, and S252 each act as charge relay system; for autoendoproteolytic cleavage activity in the active site. The active-site Schiff-base intermediate with substrate; via pyruvic acid; for decarboxylase activity is S252. S252 carries the post-translational modification Pyruvic acid (Ser); by autocatalysis.

It belongs to the phosphatidylserine decarboxylase family. PSD-B subfamily. Prokaryotic type I sub-subfamily. Heterodimer of a large membrane-associated beta subunit and a small pyruvoyl-containing alpha subunit. Pyruvate is required as a cofactor. Post-translationally, is synthesized initially as an inactive proenzyme. Formation of the active enzyme involves a self-maturation process in which the active site pyruvoyl group is generated from an internal serine residue via an autocatalytic post-translational modification. Two non-identical subunits are generated from the proenzyme in this reaction, and the pyruvate is formed at the N-terminus of the alpha chain, which is derived from the carboxyl end of the proenzyme. The autoendoproteolytic cleavage occurs by a canonical serine protease mechanism, in which the side chain hydroxyl group of the serine supplies its oxygen atom to form the C-terminus of the beta chain, while the remainder of the serine residue undergoes an oxidative deamination to produce ammonia and the pyruvoyl prosthetic group on the alpha chain. During this reaction, the Ser that is part of the protease active site of the proenzyme becomes the pyruvoyl prosthetic group, which constitutes an essential element of the active site of the mature decarboxylase.

Its subcellular location is the cell membrane. It carries out the reaction a 1,2-diacyl-sn-glycero-3-phospho-L-serine + H(+) = a 1,2-diacyl-sn-glycero-3-phosphoethanolamine + CO2. The protein operates within phospholipid metabolism; phosphatidylethanolamine biosynthesis; phosphatidylethanolamine from CDP-diacylglycerol: step 2/2. In terms of biological role, catalyzes the formation of phosphatidylethanolamine (PtdEtn) from phosphatidylserine (PtdSer). This chain is Phosphatidylserine decarboxylase proenzyme, found in Shewanella baltica (strain OS223).